Consider the following 89-residue polypeptide: Alpha-latrotoxin associated low molecular weight protein SGV242-280 (89 aa).

Positions 1-18 (MSKLHFLILLSVIVSVFC) are cleaved as a signal peptide.

The protein belongs to the arthropod CHH/MIH/GIH/VIH hormone family. Expressed by the venom gland.

It is found in the secreted. Functionally, may increase the toxicity of alpha-latrotoxin and/or other venom components. Is non-toxic to mice and to the cockroach Periplaneta americana. The protein is Alpha-latrotoxin associated low molecular weight protein SGV242-280 of Steatoda grossa (False black widow).